Consider the following 530-residue polypeptide: Potassium voltage-gated channel subfamily A member 6 (530 aa).

Positions 1–35 (MRSEKSLTLAAPGEVRGPEGEQQDAGEFQEAEGGG) are disordered. Ser-3 is modified (phosphoserine). Positions 21 to 30 (EQQDAGEFQE) are enriched in acidic residues. The chain crosses the membrane as a helical span at residues 172–193 (PARGIAIVSVLVILISIVIFCL). The segment at 203–239 (GRGGSNEGSGTRMSPASRGSHEEEDEDEDSYAFPGSI) is disordered. The residue at position 222 (Ser-222) is a Phosphoserine; by CK2. A helical transmembrane segment spans residues 264–285 (FFLVETLCIVWFTFELLVRFSA). Cys-286 carries the S-palmitoyl cysteine lipid modification. Residues 297 to 317 (MNIIDLVAIFPYFITLGTELV) traverse the membrane as a helical segment. The helical; Voltage-sensor transmembrane segment at 339-359 (LAILRVIRLVRVFRIFKLSRH) threads the bilayer. Residues 361-374 (KGLQILGKTLQASM) are S4-S5 linker. The chain crosses the membrane as a helical span at residues 375–396 (RELGLLIFFLFIGVILFSSAVY). The helical intramembrane region spans 411-422 (PDAFWWAVVTMT). The Selectivity filter motif lies at 423 to 428 (TVGYGD). The stretch at 423-430 (TVGYGDMY) is an intramembrane region. Residues 438–466 (IVGSLCAIAGVLTIALPVPVIVSNFNYFY) traverse the membrane as a helical segment. Residue Ser-512 is modified to Phosphoserine; by PKA. Residues 527–529 (LTE) carry the PDZ-binding motif. Thr-528 is subject to Phosphothreonine; by PKA.

It belongs to the potassium channel family. A (Shaker) (TC 1.A.1.2) subfamily. Kv1.6/KCNA6 sub-subfamily. In terms of assembly, homotetramer and heterotetramer of potassium channel proteins. Interacts with KCNAB1 and KCNAB2.

The protein localises to the cell membrane. It carries out the reaction K(+)(in) = K(+)(out). Voltage-gated potassium channel that mediates transmembrane potassium transport in excitable membranes. Forms tetrameric potassium-selective channels through which potassium ions pass in accordance with their electrochemical gradient. The channel alternates between opened and closed conformations in response to the voltage difference across the membrane. Can form functional homotetrameric channels and heterotetrameric channels that contain variable proportions of KCNA1, KCNA2, KCNA4, KNCA5, KCNA6, and possibly other family members as well; channel properties depend on the type of alpha subunits that are part of the channel. Channel properties are modulated by cytoplasmic beta subunits that regulate the subcellular location of the alpha subunits and promote rapid inactivation. Homotetrameric channels display rapid activation and slow inactivation. The sequence is that of Potassium voltage-gated channel subfamily A member 6 (Kcna6) from Rattus norvegicus (Rat).